A 30-amino-acid chain; its full sequence is Putative UPF0377 protein YNR075C-A (30 aa).

It belongs to the UPF0377 family.

The sequence is that of Putative UPF0377 protein YNR075C-A from Saccharomyces cerevisiae (strain ATCC 204508 / S288c) (Baker's yeast).